Reading from the N-terminus, the 264-residue chain is Thymidylate synthase (264 aa).

DUMP is bound at residue arginine 21. A (6R)-5,10-methylene-5,6,7,8-tetrahydrofolate-binding site is contributed by histidine 51. Residue 126-127 participates in dUMP binding; the sequence is RR. The active-site Nucleophile is the cysteine 146. DUMP-binding positions include 166–169, asparagine 177, and 207–209; these read RSAD and HIY. (6R)-5,10-methylene-5,6,7,8-tetrahydrofolate is bound at residue aspartate 169. Residue alanine 263 participates in (6R)-5,10-methylene-5,6,7,8-tetrahydrofolate binding.

Belongs to the thymidylate synthase family. Bacterial-type ThyA subfamily. In terms of assembly, homodimer.

Its subcellular location is the cytoplasm. It catalyses the reaction dUMP + (6R)-5,10-methylene-5,6,7,8-tetrahydrofolate = 7,8-dihydrofolate + dTMP. Its pathway is pyrimidine metabolism; dTTP biosynthesis. Catalyzes the reductive methylation of 2'-deoxyuridine-5'-monophosphate (dUMP) to 2'-deoxythymidine-5'-monophosphate (dTMP) while utilizing 5,10-methylenetetrahydrofolate (mTHF) as the methyl donor and reductant in the reaction, yielding dihydrofolate (DHF) as a by-product. This enzymatic reaction provides an intracellular de novo source of dTMP, an essential precursor for DNA biosynthesis. This chain is Thymidylate synthase, found in Brucella anthropi (strain ATCC 49188 / DSM 6882 / CCUG 24695 / JCM 21032 / LMG 3331 / NBRC 15819 / NCTC 12168 / Alc 37) (Ochrobactrum anthropi).